The following is a 339-amino-acid chain: Ketol-acid reductoisomerase (NADP(+)) (339 aa).

The KARI N-terminal Rossmann domain maps to 1 to 182 (MRVYYDRDAD…GGGRAGIIET (182 aa)). Residues 24–27 (YGSQ), Arg-48, Ser-51, Thr-53, and 83–86 (DELQ) each bind NADP(+). Residue His-108 is part of the active site. Gly-134 is a binding site for NADP(+). One can recognise a KARI C-terminal knotted domain in the interval 183-328 (TFKEECETDL…AKLRGMMPWI (146 aa)). Asp-191, Glu-195, Glu-227, and Glu-231 together coordinate Mg(2+). Ser-252 contacts substrate.

Belongs to the ketol-acid reductoisomerase family. Requires Mg(2+) as cofactor.

The enzyme catalyses (2R)-2,3-dihydroxy-3-methylbutanoate + NADP(+) = (2S)-2-acetolactate + NADPH + H(+). It carries out the reaction (2R,3R)-2,3-dihydroxy-3-methylpentanoate + NADP(+) = (S)-2-ethyl-2-hydroxy-3-oxobutanoate + NADPH + H(+). It functions in the pathway amino-acid biosynthesis; L-isoleucine biosynthesis; L-isoleucine from 2-oxobutanoate: step 2/4. Its pathway is amino-acid biosynthesis; L-valine biosynthesis; L-valine from pyruvate: step 2/4. Functionally, involved in the biosynthesis of branched-chain amino acids (BCAA). Catalyzes an alkyl-migration followed by a ketol-acid reduction of (S)-2-acetolactate (S2AL) to yield (R)-2,3-dihydroxy-isovalerate. In the isomerase reaction, S2AL is rearranged via a Mg-dependent methyl migration to produce 3-hydroxy-3-methyl-2-ketobutyrate (HMKB). In the reductase reaction, this 2-ketoacid undergoes a metal-dependent reduction by NADPH to yield (R)-2,3-dihydroxy-isovalerate. This is Ketol-acid reductoisomerase (NADP(+)) from Methylorubrum populi (strain ATCC BAA-705 / NCIMB 13946 / BJ001) (Methylobacterium populi).